A 36-amino-acid polypeptide reads, in one-letter code: Cytochrome b6-f complex subunit 7 (36 aa).

Residues 1–5 (NAAAE) are Lumenal-facing. The chain crosses the membrane as a helical span at residues 6 to 28 (IFRIAAVMNGLTLVGVAIGFVLL). The Stromal segment spans residues 29–36 (RIEATVEE).

This sequence belongs to the PetM family. The 4 large subunits of the cytochrome b6-f complex are cytochrome b6, subunit IV (17 kDa polypeptide, PetD), cytochrome f and the Rieske protein, while the 4 small subunits are PetG, PetL, PetM and PetN. The complex functions as a dimer.

Its subcellular location is the plastid. The protein localises to the chloroplast thylakoid membrane. In terms of biological role, component of the cytochrome b6-f complex, which mediates electron transfer between photosystem II (PSII) and photosystem I (PSI), cyclic electron flow around PSI, and state transitions. The polypeptide is Cytochrome b6-f complex subunit 7 (Spinacia oleracea (Spinach)).